A 270-amino-acid polypeptide reads, in one-letter code: Elongation factor Ts (270 aa).

The interval 76 to 79 (TDFV) is involved in Mg(2+) ion dislocation from EF-Tu.

The protein belongs to the EF-Ts family.

The protein resides in the cytoplasm. Its function is as follows. Associates with the EF-Tu.GDP complex and induces the exchange of GDP to GTP. It remains bound to the aminoacyl-tRNA.EF-Tu.GTP complex up to the GTP hydrolysis stage on the ribosome. This Corynebacterium aurimucosum (strain ATCC 700975 / DSM 44827 / CIP 107346 / CN-1) (Corynebacterium nigricans) protein is Elongation factor Ts.